The sequence spans 233 residues: Small ribosomal subunit protein uS3 (233 aa).

Positions 39-107 (IRAFLKRKLY…DVNINIKEER (69 aa)) constitute a KH type-2 domain. The segment covering 212–222 (MQPEKTEESAP) has biased composition (basic and acidic residues). The tract at residues 212–233 (MQPEKTEESAPAKKPRRTRRGK) is disordered. Positions 224-233 (KKPRRTRRGK) are enriched in basic residues.

This sequence belongs to the universal ribosomal protein uS3 family. Part of the 30S ribosomal subunit. Forms a tight complex with proteins S10 and S14.

Binds the lower part of the 30S subunit head. Binds mRNA in the 70S ribosome, positioning it for translation. In Campylobacter jejuni subsp. jejuni serotype O:6 (strain 81116 / NCTC 11828), this protein is Small ribosomal subunit protein uS3.